A 227-amino-acid polypeptide reads, in one-letter code: Ribonuclease 3 (227 aa).

The RNase III domain maps to 6-128; it reads ASDYQQRIGY…VIAAIYLDAD (123 aa). Position 41 (glutamate 41) interacts with Mg(2+). Aspartate 45 is a catalytic residue. Residues aspartate 114 and glutamate 117 each contribute to the Mg(2+) site. Residue glutamate 117 is part of the active site. Residues 155 to 225 form the DRBM domain; the sequence is DPKTRLQEWL…ASHAIDQLDS (71 aa). The segment covering 203–212 has biased composition (basic and acidic residues); the sequence is GEGSSRRLAE. Residues 203–227 form a disordered region; it reads GEGSSRRLAEQDAASHAIDQLDSNK.

Belongs to the ribonuclease III family. Homodimer. It depends on Mg(2+) as a cofactor.

Its subcellular location is the cytoplasm. The enzyme catalyses Endonucleolytic cleavage to 5'-phosphomonoester.. Its function is as follows. Digests double-stranded RNA. Involved in the processing of primary rRNA transcript to yield the immediate precursors to the large and small rRNAs (23S and 16S). Processes some mRNAs, and tRNAs when they are encoded in the rRNA operon. Processes pre-crRNA and tracrRNA of type II CRISPR loci if present in the organism. This Xylella fastidiosa (strain M23) protein is Ribonuclease 3.